The primary structure comprises 21 residues: Short neurotoxin E1 (21 aa).

Positions 1–21 are disordered; that stretch reads MICYNHQSSEPPTTXTCSEGQ.

Contains 4 disulfide bonds. As to expression, expressed by the venom gland.

The protein localises to the secreted. In terms of biological role, binds to muscle nicotinic acetylcholine receptor (nAChR) and inhibit acetylcholine from binding to the receptor, thereby impairing neuromuscular transmission. The protein is Short neurotoxin E1 of Micrurus pyrrhocryptus (Coral snake).